A 597-amino-acid polypeptide reads, in one-letter code: Putative heat shock protein HSP 90-beta-3 (597 aa).

ATP contacts are provided by asparagine 46, aspartate 88, and lysine 107. Residues aspartate 201–lysine 241 form a disordered region. Positions isoleucine 204–aspartate 223 are enriched in acidic residues. The segment covering glutamate 224–glycine 233 has biased composition (basic and acidic residues). Arginine 334 provides a ligand contact to ATP. Positions leucine 414–lysine 446 form a coiled coil. Acidic residues predominate over residues aspartate 564–proline 578. The disordered stretch occupies residues aspartate 564 to aspartate 597. Residues methionine 593–aspartate 597 carry the TPR repeat-binding motif.

The protein belongs to the heat shock protein 90 family. In terms of assembly, homodimer.

Its subcellular location is the cytoplasm. Its function is as follows. Putative molecular chaperone that may promote the maturation, structural maintenance and proper regulation of specific target proteins. This Homo sapiens (Human) protein is Putative heat shock protein HSP 90-beta-3 (HSP90AB3P).